Consider the following 109-residue polypeptide: UPF0122 protein ABC2295 (109 aa).

It belongs to the UPF0122 family.

In terms of biological role, might take part in the signal recognition particle (SRP) pathway. This is inferred from the conservation of its genetic proximity to ftsY/ffh. May be a regulatory protein. This chain is UPF0122 protein ABC2295, found in Shouchella clausii (strain KSM-K16) (Alkalihalobacillus clausii).